A 286-amino-acid polypeptide reads, in one-letter code: 4-diphosphocytidyl-2-C-methyl-D-erythritol kinase (286 aa).

Residue Lys11 is part of the active site. 94 to 104 lines the ATP pocket; the sequence is PMGGGIGGGSS. Asp136 is an active-site residue.

Belongs to the GHMP kinase family. IspE subfamily.

The catalysed reaction is 4-CDP-2-C-methyl-D-erythritol + ATP = 4-CDP-2-C-methyl-D-erythritol 2-phosphate + ADP + H(+). Its pathway is isoprenoid biosynthesis; isopentenyl diphosphate biosynthesis via DXP pathway; isopentenyl diphosphate from 1-deoxy-D-xylulose 5-phosphate: step 3/6. Functionally, catalyzes the phosphorylation of the position 2 hydroxy group of 4-diphosphocytidyl-2C-methyl-D-erythritol. This chain is 4-diphosphocytidyl-2-C-methyl-D-erythritol kinase, found in Pseudomonas putida (strain ATCC 47054 / DSM 6125 / CFBP 8728 / NCIMB 11950 / KT2440).